Here is a 288-residue protein sequence, read N- to C-terminus: MSNLKQLRTRIKSVKSTQKITKAMQLVSASKMAKIKSQIANSNFYIEAISKMMSDILSIDMYELSIEEQKFFNTIPNKANLLIVMASQRGLCGTFNYSIIKQVKNDIKELENKGEQIKLIIIGKKGYEALKRQYANYIDSYFELPKIHDENLMLQVKQKIMSAVENLEVSNCVIYFNKFKNAMTQIMTRQQILPIEKYHDDSKVDDDYYEYEGENLISNLINLYVNSQINYALLQSRASEEGARMTAMENATNNANDLISKLVLKLNRSRQAIITTELIEIIAGSEAV.

Belongs to the ATPase gamma chain family. In terms of assembly, F-type ATPases have 2 components, CF(1) - the catalytic core - and CF(0) - the membrane proton channel. CF(1) has five subunits: alpha(3), beta(3), gamma(1), delta(1), epsilon(1). CF(0) has three main subunits: a, b and c.

Its subcellular location is the cell inner membrane. Its function is as follows. Produces ATP from ADP in the presence of a proton gradient across the membrane. The gamma chain is believed to be important in regulating ATPase activity and the flow of protons through the CF(0) complex. The sequence is that of ATP synthase gamma chain from Rickettsia felis (strain ATCC VR-1525 / URRWXCal2) (Rickettsia azadi).